A 291-amino-acid chain; its full sequence is NAD kinase (291 aa).

The active-site Proton acceptor is the D73. NAD(+) contacts are provided by residues 73-74 (DG), 147-148 (ND), R175, D177, and Q246.

Belongs to the NAD kinase family. A divalent metal cation serves as cofactor.

The protein resides in the cytoplasm. The catalysed reaction is NAD(+) + ATP = ADP + NADP(+) + H(+). Functionally, involved in the regulation of the intracellular balance of NAD and NADP, and is a key enzyme in the biosynthesis of NADP. Catalyzes specifically the phosphorylation on 2'-hydroxyl of the adenosine moiety of NAD to yield NADP. This chain is NAD kinase, found in Laribacter hongkongensis (strain HLHK9).